The sequence spans 174 residues: MELVIGRVVKAHGITGEVVVEIRTDEPDRRFTPGASLRAKRSRDGGTGRNYVIEGVREHGARLLVRLAGVNDRDTADGLRGSLFVIDSADLPPIDEPDTYYDHQLEGLRVRTTAGQDVGVVAEVLHTGAGELLAVKCDSGEVLVPFVGAIVTSVSLDDRILEIDPPDGLLDLGS.

The region spanning 96 to 169 (EPDTYYDHQL…ILEIDPPDGL (74 aa)) is the PRC barrel domain.

Belongs to the RimM family. In terms of assembly, binds ribosomal protein uS19.

It is found in the cytoplasm. An accessory protein needed during the final step in the assembly of 30S ribosomal subunit, possibly for assembly of the head region. Essential for efficient processing of 16S rRNA. May be needed both before and after RbfA during the maturation of 16S rRNA. It has affinity for free ribosomal 30S subunits but not for 70S ribosomes. This chain is Ribosome maturation factor RimM, found in Mycobacterium marinum (strain ATCC BAA-535 / M).